The sequence spans 402 residues: Propionate kinase (402 aa).

Asparagine 11 and lysine 18 together coordinate ATP. Residue asparagine 11 coordinates Mg(2+). Arginine 86 contributes to the substrate binding site. The Proton donor/acceptor role is filled by aspartate 143. Residues histidine 175, 203 to 207 (HLGNG), 278 to 280 (DLR), and 326 to 330 (GIGEN) contribute to the ATP site.

It belongs to the acetokinase family. TdcD subfamily. Homodimer. Mg(2+) is required as a cofactor.

It carries out the reaction propanoate + ATP = propanoyl phosphate + ADP. Its pathway is amino-acid degradation; L-threonine degradation via propanoate pathway; propanoate from L-threonine: step 4/4. Functionally, catalyzes the conversion of propionyl phosphate and ADP to propionate and ATP. The protein is Propionate kinase of Edwardsiella piscicida.